The following is a 319-amino-acid chain: Fructokinase (319 aa).

This sequence belongs to the carbohydrate kinase PfkB family. Expressed in swelling stolons and, at higher levels, in developing tubers. Low levels found in leaves and stems from tuberizing plants.

The catalysed reaction is D-fructose + ATP = D-fructose 6-phosphate + ADP + H(+). The protein operates within glycan biosynthesis; starch biosynthesis. May play an important role in maintaining the flux of carbon towards starch formation. The chain is Fructokinase from Solanum tuberosum (Potato).